The chain runs to 344 residues: N,N-dimethyltransferase OxyT (344 aa).

S-adenosyl-L-methionine-binding positions include Asp205 and 231–233 (GDF).

This sequence belongs to the class I-like SAM-binding methyltransferase superfamily. Cation-independent O-methyltransferase family.

The catalysed reaction is 4-amino-4-dedimethylamino-anhydrotetracycline + S-adenosyl-L-methionine = 4-methylamino-4-dedimethylamino-anhydrotetracycline + S-adenosyl-L-homocysteine + H(+). The enzyme catalyses 4-methylamino-4-dedimethylamino-anhydrotetracycline + S-adenosyl-L-methionine = anhydrotetracycline + S-adenosyl-L-homocysteine + H(+). Its pathway is antibiotic biosynthesis; oxytetracycline biosynthesis. Functionally, involved in the biosynthesis of the tetracycline antibiotic, oxytetracycline. Catalyzes the dimethylation of 4-amino-4-de(dimethylamino)anhydrotetracycline (4-amino-ATC) to yield anhydrotetracycline (ATC). Also able to catalyze the dimethylation of 7-chloro-, 6-demethyl-, 2-decarboxamido-2-nitrile-, and 4-methylamino-derivatives of 4-amino-4-de(dimethylamino)anhydrotetracycline. This is N,N-dimethyltransferase OxyT from Streptomyces rimosus.